The following is a 131-amino-acid chain: Insertion element iso-IS1n protein InsB (131 aa).

It belongs to the transposase 27 family.

Functionally, absolutely required for transposition of IS1. The chain is Insertion element iso-IS1n protein InsB (insB) from Shigella dysenteriae.